Consider the following 932-residue polypeptide: Serotype-specific antigen 1 (932 aa).

The first 24 residues, M1–A24, serve as a signal peptide directing secretion. In terms of domain architecture, Peptidase S8 spans Y25–V407. Catalysis depends on charge relay system residues D58, H116, and S351. Residues H669–L932 form the Autotransporter domain.

This sequence belongs to the peptidase S8 family.

The protein localises to the cell outer membrane. The protein is Serotype-specific antigen 1 (ssa1) of Mannheimia haemolytica (Pasteurella haemolytica).